The primary structure comprises 437 residues: Homogentisate 1,2-dioxygenase (437 aa).

Residues 15–34 are disordered; that stretch reads NEHATSDPRVPDALPVGQNS. His-336, Glu-342, and His-372 together coordinate Fe cation.

This sequence belongs to the homogentisate dioxygenase family. Fe cation serves as cofactor. Expressed in the hypodermis and intestine.

It catalyses the reaction homogentisate + O2 = 4-maleylacetoacetate + H(+). It functions in the pathway amino-acid degradation; L-phenylalanine degradation; acetoacetate and fumarate from L-phenylalanine: step 4/6. In terms of biological role, plays a role in the tyrosine degradation pathway. The chain is Homogentisate 1,2-dioxygenase from Caenorhabditis elegans.